The chain runs to 953 residues: Communesin biosynthesis cluster-specific transcription factor cnsN (953 aa).

Residues 371-418 are disordered; it reads ELESTSPRTSHSSLSQDDTASLHSRSSLSSSPGRFPPSQKLVATSDSP. A compositionally biased stretch (low complexity) spans 374–408; that stretch reads STSPRTSHSSLSQDDTASLHSRSSLSSSPGRFPPS.

Its subcellular location is the nucleus. In terms of biological role, transcriptional regulator; part of the gene cluster that mediates the biosynthesis of communesins, a prominent class of indole alkaloids with great potential as pharmaceuticals. The sequence is that of Communesin biosynthesis cluster-specific transcription factor cnsN from Penicillium expansum (Blue mold rot fungus).